Consider the following 230-residue polypeptide: RNA polymerase sigma factor FliA (230 aa).

Residues 6-78 (LWQRYVPLVR…MLDELRSRDW (73 aa)) are sigma-70 factor domain-2. The Interaction with polymerase core subunit RpoC motif lies at 33-36 (DLLQ). The tract at residues 86–156 (NAREVASAMQ…VEPMLEGHED (71 aa)) is sigma-70 factor domain-3. A sigma-70 factor domain-4 region spans residues 175–223 (AIEALPEREKMVLTLYYQEELNLKEIGAVLEVGESRVSQLHSQAIKRLR). The segment at residues 197–216 (LKEIGAVLEVGESRVSQLHS) is a DNA-binding region (H-T-H motif).

The protein belongs to the sigma-70 factor family. FliA subfamily.

It localises to the cytoplasm. Sigma factors are initiation factors that promote the attachment of RNA polymerase to specific initiation sites and are then released. This sigma factor controls the expression of flagella-related genes. This chain is RNA polymerase sigma factor FliA, found in Yersinia enterocolitica.